The following is a 1396-amino-acid chain: DNA-directed RNA polymerase subunit beta' (1396 aa).

Positions 70, 72, 85, and 88 each coordinate Zn(2+). 3 residues coordinate Mg(2+): Asp-460, Asp-462, and Asp-464. Zn(2+) is bound by residues Cys-807, Cys-881, Cys-888, and Cys-891. Acidic residues predominate over residues 1361–1378 (EPEEIEEPVPEDLEDETA). A disordered region spans residues 1361-1396 (EPEEIEEPVPEDLEDETAGADSAQAASEESVAEGKD). Residues 1379-1389 (GADSAQAASEE) are compositionally biased toward low complexity.

This sequence belongs to the RNA polymerase beta' chain family. In terms of assembly, the RNAP catalytic core consists of 2 alpha, 1 beta, 1 beta' and 1 omega subunit. When a sigma factor is associated with the core the holoenzyme is formed, which can initiate transcription. The cofactor is Mg(2+). Zn(2+) serves as cofactor.

It carries out the reaction RNA(n) + a ribonucleoside 5'-triphosphate = RNA(n+1) + diphosphate. DNA-dependent RNA polymerase catalyzes the transcription of DNA into RNA using the four ribonucleoside triphosphates as substrates. The polypeptide is DNA-directed RNA polymerase subunit beta' (Syntrophotalea carbinolica (strain DSM 2380 / NBRC 103641 / GraBd1) (Pelobacter carbinolicus)).